The following is a 224-amino-acid chain: Phosphoglycolate phosphatase (224 aa).

The active-site Nucleophile is the Asp11. Positions 11, 13, and 177 each coordinate Mg(2+).

Belongs to the HAD-like hydrolase superfamily. CbbY/CbbZ/Gph/YieH family. Mg(2+) is required as a cofactor.

It catalyses the reaction 2-phosphoglycolate + H2O = glycolate + phosphate. It participates in organic acid metabolism; glycolate biosynthesis; glycolate from 2-phosphoglycolate: step 1/1. Specifically catalyzes the dephosphorylation of 2-phosphoglycolate. Is involved in the dissimilation of the intracellular 2-phosphoglycolate formed during the DNA repair of 3'-phosphoglycolate ends, a major class of DNA lesions induced by oxidative stress. In Haemophilus influenzae (strain 86-028NP), this protein is Phosphoglycolate phosphatase.